A 477-amino-acid chain; its full sequence is V-type ATP synthase beta chain (477 aa).

The protein belongs to the ATPase alpha/beta chains family.

Its function is as follows. Produces ATP from ADP in the presence of a proton gradient across the membrane. The V-type beta chain is a regulatory subunit. This Anaeromyxobacter dehalogenans (strain 2CP-1 / ATCC BAA-258) protein is V-type ATP synthase beta chain.